Reading from the N-terminus, the 506-residue chain is Histidine ammonia-lyase (506 aa).

Positions 142-144 (ASG) form a cross-link, 5-imidazolinone (Ala-Gly). Ser-143 is subject to 2,3-didehydroalanine (Ser).

It belongs to the PAL/histidase family. Contains an active site 4-methylidene-imidazol-5-one (MIO), which is formed autocatalytically by cyclization and dehydration of residues Ala-Ser-Gly.

The protein resides in the cytoplasm. It catalyses the reaction L-histidine = trans-urocanate + NH4(+). It functions in the pathway amino-acid degradation; L-histidine degradation into L-glutamate; N-formimidoyl-L-glutamate from L-histidine: step 1/3. In Bacillus cereus (strain B4264), this protein is Histidine ammonia-lyase.